Consider the following 307-residue polypeptide: MSSDSNAKPLPFIYQFISGAVAGISELTVMYPLDVVKTRFQLEVTTPTAAAVGKQVERYNGVIDCLKKIVKKEGFSRLYRGISSPMLMEAPKRATKFACNDQYQKIFKNLFNTNETTQKISIAAGASAGMTEAAVIVPFELIKIRMQDVKSSYLGPMDCLKKTIKNEGIMGLYKGIESTMWRNALWNGGYFGVIYQVRNSMPVAKTKGQKTRNDLIAGAIGGTVGTMLNTPFDVVKSRIQSVDAVSSAVKKYNWCLPSLLVIYREEGFRALYKGFVPKVCRLAPGGSLMLVVFTGMMNFFRDLKYGH.

Helical transmembrane passes span 10–30 (LPFIYQFISGAVAGISELTVM), 76–95 (SRLYRGISSPMLMEAPKRAT), 122–142 (IAAGASAGMTEAAVIVPFELI), 171–191 (GLYKGIESTMWRNALWNGGYF), 215–235 (LIAGAIGGTVGTMLNTPFDVV), and 280–300 (CRLAPGGSLMLVVFTGMMNFF). Solcar repeat units lie at residues 10–106 (LPFI…YQKI), 116–200 (TTQK…VRNS), and 209–299 (QKTR…MMNF).

This sequence belongs to the mitochondrial carrier (TC 2.A.29) family.

The protein resides in the mitochondrion inner membrane. Functionally, transports C5-C7 oxodicarboxylates across the inner membranes of mitochondria. Can transport 2-oxoadipate, 2-oxoglutarate, adipate, glutarate, 2-oxopimelate, oxaloacetate, citrate and malate. The main physiological role is probably to supply 2-oxoadipate and 2-oxoglutarate from the mitochondrial matrix to the cytosol where they are used in the biosynthesis of lysine and glutamate, respectively, and in lysine catabolism. The sequence is that of Mitochondrial 2-oxodicarboxylate carrier 2 (ODC2) from Saccharomyces cerevisiae (strain ATCC 204508 / S288c) (Baker's yeast).